A 247-amino-acid chain; its full sequence is 7-carboxy-7-deazaguanine synthase (247 aa).

Substrate is bound by residues 15–17 and arginine 30; that span reads IQG. The region spanning 21 to 247 is the Radical SAM core domain; that stretch reads LVGRRQIFVR…PQMHRALGLR (227 aa). 3 residues coordinate [4Fe-4S] cluster: cysteine 34, cysteine 38, and cysteine 41. Threonine 43 is a binding site for Mg(2+). Position 78 (threonine 78) interacts with substrate. Glycine 80 contacts S-adenosyl-L-methionine.

The protein belongs to the radical SAM superfamily. 7-carboxy-7-deazaguanine synthase family. As to quaternary structure, homodimer. It depends on [4Fe-4S] cluster as a cofactor. S-adenosyl-L-methionine is required as a cofactor. Requires Mg(2+) as cofactor.

The enzyme catalyses 6-carboxy-5,6,7,8-tetrahydropterin + H(+) = 7-carboxy-7-deazaguanine + NH4(+). It participates in purine metabolism; 7-cyano-7-deazaguanine biosynthesis. In terms of biological role, catalyzes the complex heterocyclic radical-mediated conversion of 6-carboxy-5,6,7,8-tetrahydropterin (CPH4) to 7-carboxy-7-deazaguanine (CDG), a step common to the biosynthetic pathways of all 7-deazapurine-containing compounds. This chain is 7-carboxy-7-deazaguanine synthase, found in Methanothermobacter thermautotrophicus (strain ATCC 29096 / DSM 1053 / JCM 10044 / NBRC 100330 / Delta H) (Methanobacterium thermoautotrophicum).